Here is a 918-residue protein sequence, read N- to C-terminus: Chaperone protein ClpC1, chloroplastic (918 aa).

A Clp R domain is found at 88–230; sequence FERFTEKAIK…RTQVIRMVGE (143 aa). Repeat stretches follow at residues 91–156 and 166–230; these read FTEK…IGRG and FTPR…MVGE. The i stretch occupies residues 251–498; the sequence is LEEYGTNLTK…RVRLRHAQLP (248 aa). Residue 296-303 participates in ATP binding; the sequence is GEPGVGKT. Residues 505 to 540 form the UVR domain; sequence DKELRQVTKDKNEAVRGQDFEKAGELRDREMELKAQ. Residues 565-756 form an II region; it reads VTEADIQHIV…LLIMTSNVGS (192 aa). 639–646 is a binding site for ATP; it reads GPTGVGKS.

It belongs to the ClpA/ClpB family. ClpC subfamily. In terms of tissue distribution, widely expressed.

The protein localises to the plastid. The protein resides in the chloroplast. Its function is as follows. Molecular chaperone that may interact with a ClpP-like protease involved in degradation of denatured proteins in the chloroplast. The chain is Chaperone protein ClpC1, chloroplastic (CLPC1) from Oryza sativa subsp. japonica (Rice).